The following is a 464-amino-acid chain: MNFLRQFGFRFTTGHGIWAATLIPACIAICMHFDLLWLGITLGALIALFSVLTIRGLRITGWVRAIFSWRRRHRSTPDIASEPAVGSTVMPGDHVAVRWQGDYLIAVIELVPRPFTPTVIVNGSAMTDDVVNTKLVERLLEAHCPDLEADVVSAGYRVGKTAPASLIALYEQVVGPYPAPANRRTWIVLRADPEKTQRSAHRRDSGVSGLARYLVASATRIADQLASNGVDARCCRSFDDYEKATEISYERETWSSIKGRSTFTAAYTAPGGPDMWWSARADHTITRVRVRPGAAPSSAILLTTLANPTTPRGFSCLFGGQRAALQGIVPVSDKHYDLPIGSAGVLVGETADRYPVYMPFDNVDVSINLGDARLFTQFVIRSAAAGAVVTLGPQFREFATMINGRVGRTPRIGWPNATTYLGPHQGVGRVILRPNFIDTPRHRQLPIQLINPREESRYQMALEQ.

2 helical membrane-spanning segments follow: residues 11-31 and 34-54; these read FTTGHGIWAATLIPACIAICM and DLLWLGITLGALIALFSVLTI.

Belongs to the EccE family. Part of the ESX-1 / type VII secretion system (T7SS), which is composed of cytosolic and membrane components. The ESX-1 membrane complex is composed of EccB1, EccCa1, EccCb1, EccD1 and EccE1.

The protein localises to the cell inner membrane. Functionally, part of the ESX-1 / type VII specialized secretion system (T7SS), which exports several proteins including EsxA and EsxB. Plays a role in DNA conjugation, in at least a donor strain. The chain is ESX-1 secretion system protein EccE1 from Mycolicibacterium smegmatis (strain ATCC 700084 / mc(2)155) (Mycobacterium smegmatis).